The chain runs to 76 residues: Monocarboxylate transporter 1 (76 aa).

A run of 3 helical transmembrane segments spans residues 1–18, 28–48, and 53–73; these read LSILAFVDMVARPSMGLA, IQYFFAASVVANGVCHLLAPL, and IGFCVYAGVFGFAFGWLSSVL. Asp-8 contributes to the H(+) binding site. Arg-12 provides a ligand contact to (S)-lactate.

The protein belongs to the major facilitator superfamily. Monocarboxylate porter (TC 2.A.1.13) family. Interacts with BSG; interaction mediates SLC16A1 targeting to the plasma membrane. Interacts with EMB; interaction mediates SLC16A1 targeting to the plasma membrane.

Its subcellular location is the cell membrane. It is found in the basolateral cell membrane. It localises to the apical cell membrane. It carries out the reaction (S)-lactate(in) + H(+)(in) = (S)-lactate(out) + H(+)(out). The catalysed reaction is acetate(out) + H(+)(out) = acetate(in) + H(+)(in). It catalyses the reaction acetoacetate(out) + H(+)(out) = acetoacetate(in) + H(+)(in). The enzyme catalyses pyruvate(out) + H(+)(out) = pyruvate(in) + H(+)(in). It carries out the reaction (R)-3-hydroxybutanoate(out) + H(+)(out) = (R)-3-hydroxybutanoate(in) + H(+)(in). The catalysed reaction is 3-methyl-2-oxobutanoate(out) + H(+)(out) = 3-methyl-2-oxobutanoate(in) + H(+)(in). It catalyses the reaction 4-methyl-2-oxopentanoate(out) + H(+)(out) = 4-methyl-2-oxopentanoate(in) + H(+)(in). The enzyme catalyses succinate(in) + 2 H(+)(in) = succinate(out) + 2 H(+)(out). Its function is as follows. Bidirectional proton-coupled monocarboxylate transporter. Catalyzes the rapid transport across the plasma membrane of many monocarboxylates such as lactate, pyruvate, acetate and the ketone bodies acetoacetate and beta-hydroxybutyrate, and thus contributes to the maintenance of intracellular pH. The transport direction is determined by the proton motive force and the concentration gradient of the substrate monocarboxylate. MCT1 is a major lactate exporter. Plays a role in cellular responses to a high-fat diet by modulating the cellular levels of lactate and pyruvate that contribute to the regulation of central metabolic pathways and insulin secretion, with concomitant effects on plasma insulin levels and blood glucose homeostasis. Facilitates the protonated monocarboxylate form of succinate export, that its transient protonation upon muscle cell acidification in exercising muscle and ischemic heart. Functions via alternate outward- and inward-open conformation states. Protonation and deprotonation is essential for the conformational transition. This is Monocarboxylate transporter 1 (SLC16A1) from Meriones unguiculatus (Mongolian jird).